A 38-amino-acid polypeptide reads, in one-letter code: Large ribosomal subunit protein bL36 (38 aa).

The protein belongs to the bacterial ribosomal protein bL36 family.

This chain is Large ribosomal subunit protein bL36, found in Mycoplasma mobile (strain ATCC 43663 / 163K / NCTC 11711) (Mesomycoplasma mobile).